The sequence spans 81 residues: RNA-binding protein Hfq (81 aa).

The Sm domain maps to 9 to 68 (DPYLNILRKERVPVSIFLVNGIKLQGQIESFDQFVILLKNTVSQMVYKHAISTVVPSRTI).

This sequence belongs to the Hfq family. As to quaternary structure, homohexamer.

Its function is as follows. RNA chaperone that binds small regulatory RNA (sRNAs) and mRNAs to facilitate mRNA translational regulation in response to envelope stress, environmental stress and changes in metabolite concentrations. Also binds with high specificity to tRNAs. In Marinomonas sp. (strain MWYL1), this protein is RNA-binding protein Hfq.